A 73-amino-acid polypeptide reads, in one-letter code: Protein SlyX homolog (73 aa).

Belongs to the SlyX family.

This chain is Protein SlyX homolog, found in Histophilus somni (strain 129Pt) (Haemophilus somnus).